The sequence spans 280 residues: Mevalonyl-coenzyme A hydratase SIDH (280 aa).

Residues 278–280 (SKL) carry the PTS1-type peroxisomal targeting signal motif.

This sequence belongs to the enoyl-CoA hydratase/isomerase family.

The protein resides in the peroxisome. It functions in the pathway siderophore biosynthesis. Functionally, mevalonyl-coenzyme A hydratase; part of the gene cluster that mediates the biosynthesis of at least 11 siderophores, including beauverichelin A, dimerumic acid (DA), Na-dimethyl coprogen (NADC), eleutherazine B, ferricrocin (FC), fusarinine A, fusarinine C (FsC), metachelin A, mevalonolactone, rhodotorulic acid (RA) and tenellin. This cocktail of siderophores for iron metabolism is essential for virulence, and more specifically for the fungal virulence in penetrating through the host cuticle. Siderophore synthesis is also involved in conidial germination under iron-deficient conditions. For biosynthesis of fusarinine C, the transacylase SIDF transfers anhydromevalonyl to N(5)-hydroxyornithine. The required anhydromevalonyl-CoA moiety is derived from mevalonate by CoA ligation and dehydration catalyzed by SIDI and sidH respectively. SIDH is not essential for siderophore production, probably due to functional redundancy of this protein family, as there are 15 homologs of SIDH in B.bassiana. The chain is Mevalonyl-coenzyme A hydratase SIDH from Beauveria bassiana (strain ARSEF 2860) (White muscardine disease fungus).